Consider the following 660-residue polypeptide: MGSSSLLLFPSSSSSATHSSYSPSSSSHAITSLLPPLPSDHHLLLYLDHQEQHHLAAAMVRKRPASDMDLPPPRRHVTGDLSDVTAAAAGAPTLSASAQLPALPTQLPAFHHTDMDLAAPAPPAPQQVAAGEGGPPSTAWVDGIIRDIIASSGAAVSVAQLIHNVREIIRPCNPDLASILELRLRSLLNSDPAPPPPPPSHPALLPPDATAPPPPPTSVAALPPPPPAQPDKRRREPQCQEQEPNQPQSPKPPTAEETAAAAAAAAAAAAAAAKERKEEQRRKQRDEEGLHLLTLLLQCAESVNADNLDEAHRALLEIAELATPFGTSTQRVAAYFAEAMSARLVSSCLGLYAPLPSPSPAGARVHGRVAAAFQVFNGISPFVKFSHFTANQAIQEAFEREERVHIIDLDIMQGLQWPGLFHILASRPGGPPRVRLTGLGASMEALEATGKRLSDFADTLGLPFEFCPVADKAGNLDPEKLGVTRREAVAVHWLRHSLYDVTGSDSNTLWLIQRLAPKVVTMVEQDLSHSGSFLARFVEAIHYYSALFDSLDASYSEDSPERHVVEQQLLSREIRNVLAVGGPARTGDVKFGSWREKLAQSGFRVSSLAGSAAAQAALLLGMFPSDGYTLIEENGALKLGWKDLCLLTASAWRPIQASGR.

Disordered stretches follow at residues 1–33 and 190–286; these read MGSS…ITSL and SDPA…KQRD. Over residues 192 to 229 the composition is skewed to pro residues; sequence PAPPPPPPSHPALLPPDATAPPPPPTSVAALPPPPPAQ. Low complexity predominate over residues 259 to 272; it reads AAAAAAAAAAAAAA. The stretch at 262 to 289 forms a coiled coil; that stretch reads AAAAAAAAAAAAKERKEEQRRKQRDEEG. Residues 273-286 are compositionally biased toward basic and acidic residues; it reads AKERKEEQRRKQRD. Residues 283–653 form the GRAS domain; sequence KQRDEEGLHL…LCLLTASAWR (371 aa). Residues 290–354 form a leucine repeat I (LRI) region; that stretch reads LHLLTLLLQC…VSSCLGLYAP (65 aa). The LxCxE motif motif lies at 297-301; the sequence is LQCAE. Residues 373–438 are VHIID; the sequence is FQVFNGISPF…GGPPRVRLTG (66 aa). The VHIID signature appears at 404–408; it reads VHIID. Positions 448–480 are leucine repeat II (LRII); it reads ATGKRLSDFADTLGLPFEFCPVADKAGNLDPEK. The interval 489–576 is PFYRE; the sequence is VAVHWLRHSL…QQLLSREIRN (88 aa). The SAW stretch occupies residues 579–653; sequence AVGGPARTGD…LCLLTASAWR (75 aa).

The protein belongs to the GRAS family.

It is found in the cytoplasm. Its function is as follows. Probable transcription factor involved in asmmetric cell division in the cortex/endodermis progenitor cell and in the process of stomata and ligule formation in leaves. This Oryza sativa subsp. indica (Rice) protein is Protein SCARECROW 2 (SCR2).